A 100-amino-acid chain; its full sequence is UPF0213 protein YhbQ (100 aa).

In terms of domain architecture, GIY-YIG spans 2-77 (TPWFLYLIRT…KQLTKRQKER (76 aa)).

Belongs to the UPF0213 family.

The polypeptide is UPF0213 protein YhbQ (Escherichia coli (strain K12 / MC4100 / BW2952)).